The chain runs to 261 residues: Indole-3-glycerol phosphate synthase (261 aa).

Belongs to the TrpC family.

It catalyses the reaction 1-(2-carboxyphenylamino)-1-deoxy-D-ribulose 5-phosphate + H(+) = (1S,2R)-1-C-(indol-3-yl)glycerol 3-phosphate + CO2 + H2O. It functions in the pathway amino-acid biosynthesis; L-tryptophan biosynthesis; L-tryptophan from chorismate: step 4/5. This Campylobacter concisus (strain 13826) protein is Indole-3-glycerol phosphate synthase.